Here is a 522-residue protein sequence, read N- to C-terminus: Protein nucleotidyltransferase YdiU (522 aa).

Positions 109, 111, 112, 132, 144, 145, 195, and 202 each coordinate ATP. Asp-271 functions as the Proton acceptor in the catalytic mechanism. Asn-272 and Asp-281 together coordinate Mg(2+). Asp-281 provides a ligand contact to ATP.

This sequence belongs to the SELO family. The cofactor is Mg(2+). It depends on Mn(2+) as a cofactor.

The enzyme catalyses L-seryl-[protein] + ATP = 3-O-(5'-adenylyl)-L-seryl-[protein] + diphosphate. It carries out the reaction L-threonyl-[protein] + ATP = 3-O-(5'-adenylyl)-L-threonyl-[protein] + diphosphate. The catalysed reaction is L-tyrosyl-[protein] + ATP = O-(5'-adenylyl)-L-tyrosyl-[protein] + diphosphate. It catalyses the reaction L-histidyl-[protein] + UTP = N(tele)-(5'-uridylyl)-L-histidyl-[protein] + diphosphate. The enzyme catalyses L-seryl-[protein] + UTP = O-(5'-uridylyl)-L-seryl-[protein] + diphosphate. It carries out the reaction L-tyrosyl-[protein] + UTP = O-(5'-uridylyl)-L-tyrosyl-[protein] + diphosphate. In terms of biological role, nucleotidyltransferase involved in the post-translational modification of proteins. It can catalyze the addition of adenosine monophosphate (AMP) or uridine monophosphate (UMP) to a protein, resulting in modifications known as AMPylation and UMPylation. The sequence is that of Protein nucleotidyltransferase YdiU from Burkholderia multivorans (strain ATCC 17616 / 249).